Here is a 112-residue protein sequence, read N- to C-terminus: Divalent-cation tolerance protein CutA (112 aa).

The Cu cation site is built by cysteine 16, histidine 83, and histidine 84.

This sequence belongs to the CutA family. Homotrimer. Cu cation serves as cofactor.

Its subcellular location is the cytoplasm. Involved in resistance toward heavy metals. This is Divalent-cation tolerance protein CutA from Shigella flexneri.